The following is a 576-amino-acid chain: (+)-alpha-terpineol synthase (576 aa).

(2E)-geranyl diphosphate is bound by residues R286, D323, D327, R466, and N469. Mg(2+) is bound by residues D323 and D327. The DDXXD motif signature appears at 323–327 (DDVYD). The Mg(2+) site is built by N469, T473, and E477.

Belongs to the terpene synthase family. Tpsb subfamily. Requires Mg(2+) as cofactor. Mn(2+) serves as cofactor.

The enzyme catalyses (2E,6E)-farnesyl diphosphate = beta-bisabolene + diphosphate. It catalyses the reaction (2E)-geranyl diphosphate + H2O = (R)-alpha-terpineol + diphosphate. It carries out the reaction (2E)-geranyl diphosphate = (4S)-limonene + diphosphate. The protein operates within secondary metabolite biosynthesis; terpenoid biosynthesis. In terms of biological role, monoterpene synthase which catalyzes the conversion of (2E)-geranyl diphosphate (GPP) to (R)-alpha-terpineol and (4S)-limonene, as well as small quantities of linalool, myrcene, (-)-alpha-pinene, (+)-sabinene and geraniol. To a lower extent, catalyzes the conversion of (2E,6E)-farnesyl diphosphate (FPP) to beta-bisabolene. The protein is (+)-alpha-terpineol synthase of Santalum album (White sandalwood).